We begin with the raw amino-acid sequence, 90 residues long: Small ribosomal subunit protein uS19 (90 aa).

The protein belongs to the universal ribosomal protein uS19 family.

Its function is as follows. Protein S19 forms a complex with S13 that binds strongly to the 16S ribosomal RNA. The sequence is that of Small ribosomal subunit protein uS19 from Rhizorhabdus wittichii (strain DSM 6014 / CCUG 31198 / JCM 15750 / NBRC 105917 / EY 4224 / RW1) (Sphingomonas wittichii).